Consider the following 383-residue polypeptide: tRNA-specific 2-thiouridylase MnmA (383 aa).

ATP-binding positions include 10–17 (AMSGGVDS) and Met-36. Catalysis depends on Cys-107, which acts as the Nucleophile. Cysteines 107 and 206 form a disulfide. An ATP-binding site is contributed by Gly-131. An interaction with tRNA region spans residues 155-157 (KDQ). The Cysteine persulfide intermediate role is filled by Cys-206. Residues 315–316 (RY) form an interaction with tRNA region.

Belongs to the MnmA/TRMU family.

It localises to the cytoplasm. It catalyses the reaction S-sulfanyl-L-cysteinyl-[protein] + uridine(34) in tRNA + AH2 + ATP = 2-thiouridine(34) in tRNA + L-cysteinyl-[protein] + A + AMP + diphosphate + H(+). In terms of biological role, catalyzes the 2-thiolation of uridine at the wobble position (U34) of tRNA, leading to the formation of s(2)U34. This chain is tRNA-specific 2-thiouridylase MnmA, found in Salinibacter ruber (strain DSM 13855 / M31).